Consider the following 2117-residue polypeptide: Tudor domain-containing 6 (2117 aa).

5 Tudor domains span residues 62–118 (DGNP…FFYL), 291–350 (AENL…FFRM), 527–584 (KPVV…FQQL), 757–816 (EPLL…FLKM), and 974–1030 (PQTF…AGDI). The segment at 1125-1216 (ASACKKESST…SSKPEVVKPK (92 aa)) is disordered. Over residues 1127–1152 (ACKKESSTGPKRDAIDQVPKSRESHA) the composition is skewed to basic and acidic residues. Polar residues-rich tracts occupy residues 1153–1174 (IQRSNDVASKQPQSRWGFSTNG) and 1181–1209 (DSGTINNCQKQPELRTSQGNLRHPCTSSK). 2 consecutive Tudor domains span residues 1282 to 1340 (DIHE…FASF) and 1485 to 1543 (CMPV…LSDV).

As to quaternary structure, interacts (via Tudor domain) with buc (when dimethylated on arginine residues); and may be responsible for recruitment of different protein complexes to germ plasm.

The protein localises to the cytoplasm. Its function is as follows. Tudor domain-containing protein involved in germ cell development, more specifically the formation of chromatoid body (during spermiogenesis), Balbiani body (during oogenesis), germ plasm (upon fertilization), and for proper miRNA expression and spliceosome maturation. Required for Balbiani body and germ plasm formation and mobility through interaction with dimethylated arginines in the prion-like protein Bucky ball (buc). Coordinates transcript deposition into future primordial germ cells. Interacts with known germ plasm mRNAs such as vasa, dazl, nanos3 and hook2. This chain is Tudor domain-containing 6, found in Danio rerio (Zebrafish).